The sequence spans 218 residues: NADH dehydrogenase [ubiquinone] iron-sulfur protein 7, mitochondrial (218 aa).

Residues 34 to 48 show a composition bias toward low complexity; that stretch reads LPALSPSTSPTSYTR. The segment at 34–61 is disordered; it reads LPALSPSTSPTSYTRPGPPSTSPPPPGL. Residues 49–60 are compositionally biased toward pro residues; it reads PGPPSTSPPPPG. Residues cysteine 93, cysteine 94, cysteine 158, and cysteine 188 each coordinate [4Fe-4S] cluster.

This sequence belongs to the complex I 20 kDa subunit family. In terms of assembly, complex I is composed of at least 49 different subunits. This is a component of the iron-sulfur (IP) fragment of the enzyme. Requires [4Fe-4S] cluster as cofactor.

The protein localises to the mitochondrion. It catalyses the reaction a ubiquinone + NADH + 5 H(+)(in) = a ubiquinol + NAD(+) + 4 H(+)(out). Functionally, core subunit of the mitochondrial membrane respiratory chain NADH dehydrogenase (Complex I) that is believed to belong to the minimal assembly required for catalysis. Complex I functions in the transfer of electrons from NADH to the respiratory chain. The immediate electron acceptor for the enzyme is believed to be ubiquinone. The chain is NADH dehydrogenase [ubiquinone] iron-sulfur protein 7, mitochondrial from Arabidopsis thaliana (Mouse-ear cress).